The sequence spans 263 residues: Hydroxyacylglutathione hydrolase (263 aa).

7 residues coordinate Zn(2+): His56, His58, Asp60, His61, His115, Asp135, and His175.

The protein belongs to the metallo-beta-lactamase superfamily. Glyoxalase II family. In terms of assembly, monomer. Zn(2+) serves as cofactor.

It carries out the reaction an S-(2-hydroxyacyl)glutathione + H2O = a 2-hydroxy carboxylate + glutathione + H(+). The protein operates within secondary metabolite metabolism; methylglyoxal degradation; (R)-lactate from methylglyoxal: step 2/2. Functionally, thiolesterase that catalyzes the hydrolysis of S-D-lactoyl-glutathione to form glutathione and D-lactic acid. The protein is Hydroxyacylglutathione hydrolase of Polaromonas sp. (strain JS666 / ATCC BAA-500).